The chain runs to 117 residues: Large ribosomal subunit protein bL19 (117 aa).

It belongs to the bacterial ribosomal protein bL19 family.

Functionally, this protein is located at the 30S-50S ribosomal subunit interface and may play a role in the structure and function of the aminoacyl-tRNA binding site. The polypeptide is Large ribosomal subunit protein bL19 (Thermotoga neapolitana (strain ATCC 49049 / DSM 4359 / NBRC 107923 / NS-E)).